The sequence spans 424 residues: Catabolic NAD-specific glutamate dehydrogenase RocG (424 aa).

Lys80 and Lys104 together coordinate substrate. Lys116 functions as the Proton donor in the catalytic mechanism. The NAD(+) site is built by Thr200 and Asn231. A substrate-binding site is contributed by Ser358.

Belongs to the Glu/Leu/Phe/Val dehydrogenases family. Homohexamer. Interacts with transcriptional regulator GltC.

It catalyses the reaction L-glutamate + NAD(+) + H2O = 2-oxoglutarate + NH4(+) + NADH + H(+). Devoted to catabolic function of glutamate (and other amino acids of the glutamate family) utilization as sole nitrogen source. It is not involved in anabolic function of glutamate biosynthesis since B.subtilis possesses only one route of glutamate biosynthesis from ammonia, catalyzed by glutamate synthase. Wild-type cells are unable to utilize glutamate or glutamine as a sole carbon source; thus RocG does not function physiologically to synthesize glutamate, but it is involved in the utilization of arginine, and proline as carbon or nitrogen source. The catabolic RocG is essential for controlling gltAB expression via an inhibitory interactions with the transcriptional regulator GltC in response to the availability of sugars. This chain is Catabolic NAD-specific glutamate dehydrogenase RocG, found in Bacillus subtilis (strain 168).